A 1555-amino-acid polypeptide reads, in one-letter code: Phospholipid-transporting ATPase DNF1 (1555 aa).

The disordered stretch occupies residues 1–85 (MAPPQEEGGG…SSNNGGSAPR (85 aa)). Residues 1–134 (MAPPQEEGGG…PKNLWFQFHN (134 aa)) are Cytoplasmic-facing. Over residues 22 to 37 (WATRRLTVKSGARKRL) the composition is skewed to basic residues. Low complexity predominate over residues 72-82 (GSISSSNNGGS). A helical transmembrane segment spans residues 135-155 (IANIFFLFLVILVIFPIFGGV). Residue asparagine 156 is a topological domain, extracellular. A helical membrane pass occupies residues 157–177 (PGLNSVPLIVIITVTAIKDAI). Topologically, residues 178–491 (EDYRRTILDI…ARIARELNFN (314 aa)) are cytoplasmic. The interval 257-288 (TRTAPWDPSHRRSVASHTEEIQMTPVPSPVPH) is disordered. The helical transmembrane segment at 492 to 512 (VICNFGILLIMCLIAAIANGI) threads the bilayer. Topologically, residues 513 to 537 (AWGKTDASLAWFEYGSIGGTPALTG) are extracellular. The chain crosses the membrane as a helical span at residues 538-558 (FITFWAAVIVFQNLVPISLYI). Residues 559–1123 (SLEIVRTLQA…TISNFFYKNM (565 aa)) lie on the Cytoplasmic side of the membrane. Residue aspartate 606 is the 4-aspartylphosphate intermediate of the active site. ATP is bound by residues aspartate 606, lysine 607, threonine 608, glutamate 740, phenylalanine 781, serine 783, lysine 786, lysine 804, arginine 839, threonine 840, threonine 919, glycine 920, aspartate 921, arginine 1031, and lysine 1037. Aspartate 606 serves as a coordination point for Mg(2+). Position 608 (threonine 608) interacts with Mg(2+). Aspartate 1057 lines the Mg(2+) pocket. Asparagine 1060 and aspartate 1061 together coordinate ATP. A Mg(2+)-binding site is contributed by aspartate 1061. A helical membrane pass occupies residues 1124–1144 (IWTWSIFWYQCYCNFDIAYIF). At 1145–1146 (EY) the chain is on the extracellular side. The helical transmembrane segment at 1147-1167 (TYILMFNLFFTSVPVILMGVL) threads the bilayer. Over 1168–1200 (DQDVSDTVSLAVPQLYRRGIERKEWTQTKFWLY) the chain is Cytoplasmic. A helical membrane pass occupies residues 1201–1221 (MIDGVYQSVMSFFIPFIFVVL). Residues 1222 to 1237 (TPTAAGNGLDVSERTR) are Extracellular-facing. The helical transmembrane segment at 1238 to 1258 (LGAYIAHPAVITINGYILINT) threads the bilayer. The Cytoplasmic portion of the chain corresponds to 1259–1262 (YRWD). The helical transmembrane segment at 1263–1283 (WLMLLSIVLSDVFIFFWTGVY) threads the bilayer. At 1284-1302 (TATTYSAGFYQAAPQVYQE) the chain is on the extracellular side. A helical membrane pass occupies residues 1303–1323 (LTFWMCLIVTPALCLLPRLVV). Arginine 1320 is a binding site for a 1,2-diacyl-sn-glycero-3-phospho-L-serine. Over 1324–1555 (KCIQKQRFPY…EGEPPREPPM (232 aa)) the chain is Cytoplasmic. Disordered regions lie at residues 1364–1456 (VEGE…ERTR) and 1489–1555 (ESTH…EPPM). Over residues 1406-1432 (ATHNTRAQNGSDGTTYIMQSRTSTELQ) the composition is skewed to polar residues. Basic and acidic residues-rich tracts occupy residues 1436–1456 (PFDRDREEETPAVRPSIERTR) and 1540–1555 (KSIDTTEGEPPREPPM).

This sequence belongs to the cation transport ATPase (P-type) (TC 3.A.3) family. Type IV subfamily. As to quaternary structure, component of a flippase complex consisting of DNF1 and CDC50. Interacts with CDC50; the interaction is direct. It depends on Mg(2+) as a cofactor.

It is found in the cell membrane. It localises to the endosome membrane. The protein localises to the golgi apparatus. Its subcellular location is the trans-Golgi network membrane. The catalysed reaction is ATP + H2O + phospholipidSide 1 = ADP + phosphate + phospholipidSide 2.. It carries out the reaction a 1,2-diacyl-sn-glycero-3-phosphoethanolamine(out) + ATP + H2O = a 1,2-diacyl-sn-glycero-3-phosphoethanolamine(in) + ADP + phosphate + H(+). The enzyme catalyses a 1,2-diacyl-sn-glycero-3-phosphocholine(out) + ATP + H2O = a 1,2-diacyl-sn-glycero-3-phosphocholine(in) + ADP + phosphate + H(+). It catalyses the reaction a beta-D-glucosyl-(1&lt;-&gt;1')-N-acylsphing-4-enine(out) + ATP + H2O = a beta-D-glucosyl-(1&lt;-&gt;1')-N-acylsphing-4-enine(in) + ADP + phosphate + H(+). The catalysed reaction is a 1,2-diacyl-sn-glycero-3-phospho-L-serine(out) + ATP + H2O = a 1,2-diacyl-sn-glycero-3-phospho-L-serine(in) + ADP + phosphate + H(+). Its function is as follows. Catalytic component of a P4-ATPase flippase complex which catalyzes the hydrolysis of ATP coupled to the transport of phosphatidylcholine and phosphatidylserine from the lumenal to the cytosolic leaflet of membranes and ensures the maintenance of asymmetric distribution of phospholipids. May also transport glucosylceramide and phosphatidylethanolamine. This Chaetomium thermophilum (strain DSM 1495 / CBS 144.50 / IMI 039719) (Thermochaetoides thermophila) protein is Phospholipid-transporting ATPase DNF1.